Here is a 371-residue protein sequence, read N- to C-terminus: Geranylgeranyl pyrophosphate synthase paxG (371 aa).

K89, R92, and H121 together coordinate isopentenyl diphosphate. Residues D128 and D132 each contribute to the Mg(2+) site. R137 provides a ligand contact to dimethylallyl diphosphate. Position 138 (R138) interacts with isopentenyl diphosphate. Residues K215, T216, and Q249 each coordinate dimethylallyl diphosphate. Residue D252 participates in Mg(2+) binding. Residues N256, K266, and K276 each coordinate dimethylallyl diphosphate. The short motif at 369–371 (GRV) is the Peroxisomal targeting signal element.

Belongs to the FPP/GGPP synthase family. Mg(2+) is required as a cofactor.

The protein resides in the peroxisome. The enzyme catalyses isopentenyl diphosphate + dimethylallyl diphosphate = (2E)-geranyl diphosphate + diphosphate. It catalyses the reaction isopentenyl diphosphate + (2E)-geranyl diphosphate = (2E,6E)-farnesyl diphosphate + diphosphate. It carries out the reaction isopentenyl diphosphate + (2E,6E)-farnesyl diphosphate = (2E,6E,10E)-geranylgeranyl diphosphate + diphosphate. Its pathway is secondary metabolite biosynthesis. Functionally, geranylgeranyl pyrophosphate synthase; part of the gene cluster that mediates the biosynthesis of paxilline, a mycotoxin that acts as an inhibitor of mammalian maxi-K channels. PaxG, the geranylgeranyl diphosphate (GGPP) synthase is proposed to catalyze the first step in paxilline biosynthesis. Condensation of indole-3-glycerol phosphate with GGPP by paxC then forms 3-geranylgeranylindole (3-GGI), followed by epoxidation and cyclization of this intermediate (by paxM and paxB) to form paspaline. Paspaline is subsequently converted to 13-desoxypaxilline by paxP, the latter being then converted to paxilline by paxQ. Finally paxilline can be mono- and di-prenylated by paxD. The polypeptide is Geranylgeranyl pyrophosphate synthase paxG (Penicillium paxilli).